The chain runs to 431 residues: Enolase (431 aa).

Residue Gln-167 coordinates (2R)-2-phosphoglycerate. The active-site Proton donor is the Glu-209. Residues Asp-246, Glu-289, and Asp-316 each coordinate Mg(2+). (2R)-2-phosphoglycerate is bound by residues Lys-341, Arg-370, Ser-371, and Lys-392. The active-site Proton acceptor is the Lys-341.

Belongs to the enolase family. Component of the RNA degradosome, a multiprotein complex involved in RNA processing and mRNA degradation. Mg(2+) is required as a cofactor.

Its subcellular location is the cytoplasm. It localises to the secreted. It is found in the cell surface. It catalyses the reaction (2R)-2-phosphoglycerate = phosphoenolpyruvate + H2O. The protein operates within carbohydrate degradation; glycolysis; pyruvate from D-glyceraldehyde 3-phosphate: step 4/5. Functionally, catalyzes the reversible conversion of 2-phosphoglycerate (2-PG) into phosphoenolpyruvate (PEP). It is essential for the degradation of carbohydrates via glycolysis. The polypeptide is Enolase (Shewanella pealeana (strain ATCC 700345 / ANG-SQ1)).